The following is a 711-amino-acid chain: Ribosomal RNA large subunit methyltransferase K/L (711 aa).

Residues 43-154 (LGYRITLWSR…RGEITIGINF (112 aa)) form the THUMP domain.

This sequence belongs to the methyltransferase superfamily. RlmKL family.

It is found in the cytoplasm. The catalysed reaction is guanosine(2445) in 23S rRNA + S-adenosyl-L-methionine = N(2)-methylguanosine(2445) in 23S rRNA + S-adenosyl-L-homocysteine + H(+). It carries out the reaction guanosine(2069) in 23S rRNA + S-adenosyl-L-methionine = N(2)-methylguanosine(2069) in 23S rRNA + S-adenosyl-L-homocysteine + H(+). In terms of biological role, specifically methylates the guanine in position 2445 (m2G2445) and the guanine in position 2069 (m7G2069) of 23S rRNA. The polypeptide is Ribosomal RNA large subunit methyltransferase K/L (Shewanella pealeana (strain ATCC 700345 / ANG-SQ1)).